The sequence spans 1163 residues: DNA-directed RNA polymerase subunit beta' (1163 aa).

Residues C59, C61, C74, and C77 each contribute to the Zn(2+) site. D449, D451, and D453 together coordinate Mg(2+). Positions 794, 868, 875, and 878 each coordinate Zn(2+).

It belongs to the RNA polymerase beta' chain family. In terms of assembly, the RNAP catalytic core consists of 2 alpha, 1 beta, 1 beta' and 1 omega subunit. When a sigma factor is associated with the core the holoenzyme is formed, which can initiate transcription. Mg(2+) serves as cofactor. Zn(2+) is required as a cofactor.

The enzyme catalyses RNA(n) + a ribonucleoside 5'-triphosphate = RNA(n+1) + diphosphate. Functionally, DNA-dependent RNA polymerase catalyzes the transcription of DNA into RNA using the four ribonucleoside triphosphates as substrates. This is DNA-directed RNA polymerase subunit beta' from Caldicellulosiruptor saccharolyticus (strain ATCC 43494 / DSM 8903 / Tp8T 6331).